A 536-amino-acid chain; its full sequence is Dual specificity calcium/calmodulin-dependent 3',5'-cyclic nucleotide phosphodiesterase 1B (536 aa).

The segment at 1 to 20 (MELSPRSPPEMLEESDCPSP) is disordered. A phosphoserine mark is found at Ser-7 and Ser-15. Calmodulin-binding stretches follow at residues 27 to 47 (PSKK…KQLE) and 118 to 141 (EKPK…MFRR). Residues 146–503 (VGPTYSTAVL…QKWKERAASG (358 aa)) enclose the PDEase domain. His-223 acts as the Proton donor in catalysis. The Zn(2+) site is built by His-227, His-263, Asp-264, and Asp-370. Residue Asp-264 coordinates Mg(2+). Disordered regions lie at residues 447-474 (LADE…VGDP) and 494-536 (QKWK…GNLD). Positions 455 to 464 (KNQPSFQWRQ) are enriched in polar residues. A phosphoserine mark is found at Ser-466 and Ser-514.

This sequence belongs to the cyclic nucleotide phosphodiesterase family. PDE1 subfamily. Homodimer. Requires Zn(2+) as cofactor. Mg(2+) serves as cofactor.

The protein localises to the cytoplasm. The protein resides in the cytosol. The enzyme catalyses a nucleoside 3',5'-cyclic phosphate + H2O = a nucleoside 5'-phosphate + H(+). It carries out the reaction 3',5'-cyclic GMP + H2O = GMP + H(+). The catalysed reaction is 3',5'-cyclic AMP + H2O = AMP + H(+). With respect to regulation, type I PDE are activated by the binding of calmodulin in the presence of Ca(2+). Its function is as follows. Cyclic nucleotide phosphodiesterase with a dual specificity for the second messengers cAMP and cGMP, which are key regulators of many important physiological processes. Has a preference for cGMP as a substrate. This Homo sapiens (Human) protein is Dual specificity calcium/calmodulin-dependent 3',5'-cyclic nucleotide phosphodiesterase 1B.